A 1270-amino-acid chain; its full sequence is Breakpoint cluster region protein (1270 aa).

Positions 28-55 form a coiled coil; it reads VGDIEQELERCKASIRRLEQEVNQERFR. 4 disordered regions span residues 67-173, 201-249, 295-396, and 412-484; these read KKSY…SADA, ISSL…DYED, KSPL…RHRQ, and TGQI…LEPT. Over residues 126-139 the composition is skewed to low complexity; sequence GRPATARRPAAAAP. A phosphoserine mark is found at S216 and S237. Residue Y247 is modified to Phosphotyrosine. Composition is skewed to low complexity over residues 348–358 and 371–384; these read SSGQSSRVSPS and SPSQ…DSSS. A phosphoserine mark is found at S358, S379, and S384. T387 is modified (phosphothreonine). S461 and S465 each carry phosphoserine. Position 473 is an omega-N-methylarginine (R473). Phosphoserine is present on residues S475 and S487. The region spanning 497–690 is the DH domain; that stretch reads MRKWVLSGIL…QNFLSSINEE (194 aa). At Y553 the chain carries Phosphotyrosine. Residue T640 is modified to Phosphothreonine. A Phosphotyrosine modification is found at Y643. T692 is subject to Phosphothreonine. One can recognise a PH domain in the interval 707-865; that stretch reads QLLKDSFMVE…WRESIREQQK (159 aa). The C2 domain occupies 892-1019; sequence HHIPLTINKE…QDRDWQRTVI (128 aa). Positions 1053–1247 constitute a Rho-GAP domain; it reads VKIAVVTKRE…VMSQVQVLLY (195 aa). Residue S1263 is modified to Phosphoserine.

In terms of assembly, homotetramer. Interacts with PDZK1. May interact with CCPG1. Interacts with HCK, FES/FPS, ABL1, PIK3R1 and GRB2. Interacts with SH2D5. Interacts with DLG4. Post-translationally, autophosphorylated. Phosphorylated by FES/FPS on tyrosine residues, leading to down-regulation of the BCR kinase activity. Phosphorylation by HCK is important for interaction with GRB2. In terms of tissue distribution, expressed in brain, including the cortex, hippocampus, cerebellum, and brainstem, as well as the spinal cord (at protein level).

It localises to the postsynaptic density. The protein resides in the cell projection. It is found in the dendritic spine. The protein localises to the axon. Its subcellular location is the synapse. It carries out the reaction L-seryl-[protein] + ATP = O-phospho-L-seryl-[protein] + ADP + H(+). The catalysed reaction is L-threonyl-[protein] + ATP = O-phospho-L-threonyl-[protein] + ADP + H(+). Its function is as follows. Protein with a unique structure having two opposing regulatory activities toward small GTP-binding proteins. The C-terminus is a GTPase-activating protein (GAP) domain which stimulates GTP hydrolysis by RAC1, RAC2 and CDC42. Accelerates the intrinsic rate of GTP hydrolysis of RAC1 or CDC42, leading to down-regulation of the active GTP-bound form. The central Dbl homology (DH) domain functions as guanine nucleotide exchange factor (GEF) that modulates the GTPases CDC42, RHOA and RAC1. Promotes the conversion of CDC42, RHOA and RAC1 from the GDP-bound to the GTP-bound form. The amino terminus contains an intrinsic kinase activity. Functions as an important negative regulator of neuronal RAC1 activity. Regulates macrophage functions such as CSF1-directed motility and phagocytosis through the modulation of RAC1 activity. Plays a major role as a RHOA GEF in keratinocytes being involved in focal adhesion formation and keratinocyte differentiation. The polypeptide is Breakpoint cluster region protein (Rattus norvegicus (Rat)).